Here is an 891-residue protein sequence, read N- to C-terminus: Protein kinase kin1 (891 aa).

A disordered region spans residues 65–116 (GYISPSSQSPHHGPVRSPSSRKPLPASPSRTRDHSLRVPVSGHSYSADEKPR). Residues 125–395 (YVLGKTIGAG…LEEVLNHPWM (271 aa)) form the Protein kinase domain. ATP-binding positions include 131-139 (IGAGSMGKV) and Lys-154. Asp-266 functions as the Proton acceptor in the catalytic mechanism. Position 528 is a phosphothreonine (Thr-528). Disordered stretches follow at residues 528–699 (TPVS…RNNR), 728–747 (TMGNPVDKNSTSPSKSTDKL), and 805–841 (TPTKSTSVHTRRKPSYGSNSTTDSYGSVPDTVPLDDN). Composition is skewed to low complexity over residues 529–538 (PVSSVPSSPV) and 583–603 (HSPSPSATSSIKKNPSSIFRR). Phosphoserine occurs at positions 535 and 536. Polar residues-rich tracts occupy residues 612 to 629 (KSSTSTLQISAPLETSQS), 649 to 659 (LVTQSAIGRST), 669 to 699 (ISSQMDSLNMDSTGPSASNMANAPPSVRNNR), 728 to 742 (TMGNPVDKNSTSPSK), and 820 to 829 (YGSNSTTDSY). The 50-residue stretch at 842 to 891 (GESPASNLAFEIYIVKVPILSLRGVSFHRISGNSWQYKTLASRILNELKL) folds into the KA1 domain.

This sequence belongs to the protein kinase superfamily. Ser/Thr protein kinase family.

The protein resides in the cytoplasm. The catalysed reaction is L-seryl-[protein] + ATP = O-phospho-L-seryl-[protein] + ADP + H(+). It carries out the reaction L-threonyl-[protein] + ATP = O-phospho-L-threonyl-[protein] + ADP + H(+). Functionally, has a role in establishing the characteristic rod cell shape. Important for cell polarity and is involved in directing growth to the cell ends. This chain is Protein kinase kin1 (kin1), found in Schizosaccharomyces pombe (strain 972 / ATCC 24843) (Fission yeast).